The sequence spans 242 residues: tRNA1(Val) (adenine(37)-N6)-methyltransferase (242 aa).

It belongs to the methyltransferase superfamily. tRNA (adenine-N(6)-)-methyltransferase family.

The protein resides in the cytoplasm. It carries out the reaction adenosine(37) in tRNA1(Val) + S-adenosyl-L-methionine = N(6)-methyladenosine(37) in tRNA1(Val) + S-adenosyl-L-homocysteine + H(+). Specifically methylates the adenine in position 37 of tRNA(1)(Val) (anticodon cmo5UAC). The protein is tRNA1(Val) (adenine(37)-N6)-methyltransferase of Mannheimia succiniciproducens (strain KCTC 0769BP / MBEL55E).